A 154-amino-acid chain; its full sequence is SsrA-binding protein (154 aa).

The disordered stretch occupies residues 130 to 154 (KLHDKRETERRRQDQRDIQRAIKRA). Positions 133–154 (DKRETERRRQDQRDIQRAIKRA) are enriched in basic and acidic residues.

It belongs to the SmpB family.

Its subcellular location is the cytoplasm. Its function is as follows. Required for rescue of stalled ribosomes mediated by trans-translation. Binds to transfer-messenger RNA (tmRNA), required for stable association of tmRNA with ribosomes. tmRNA and SmpB together mimic tRNA shape, replacing the anticodon stem-loop with SmpB. tmRNA is encoded by the ssrA gene; the 2 termini fold to resemble tRNA(Ala) and it encodes a 'tag peptide', a short internal open reading frame. During trans-translation Ala-aminoacylated tmRNA acts like a tRNA, entering the A-site of stalled ribosomes, displacing the stalled mRNA. The ribosome then switches to translate the ORF on the tmRNA; the nascent peptide is terminated with the 'tag peptide' encoded by the tmRNA and targeted for degradation. The ribosome is freed to recommence translation, which seems to be the essential function of trans-translation. This is SsrA-binding protein from Synechococcus elongatus (strain ATCC 33912 / PCC 7942 / FACHB-805) (Anacystis nidulans R2).